A 473-amino-acid polypeptide reads, in one-letter code: Endoglucanase B (473 aa).

Positions 1–17 (MKFLNTFSLLSLAIIGS) are cleaved as a signal peptide. Residues 18–367 (KAMKNISSKE…GLIKGLGNSI (350 aa)) are catalytic. Residue Glu-173 is the Proton donor of the active site. The active-site Nucleophile is the Glu-295. The tract at residues 365 to 387 (NSIKTRTTIRRTTTTTTSQSQPT) is linker. CBM10 domains follow at residues 391 to 427 (SCFSVNLGYSCCNGCEVEYTDSDGEWGVENGNWCGIK) and 436 to 473 (ICWSEKLGYPCCQNTSSVVYTDNDGKWGVENGNWCGIY).

It belongs to the glycosyl hydrolase 5 (cellulase A) family.

The enzyme catalyses Endohydrolysis of (1-&gt;4)-beta-D-glucosidic linkages in cellulose, lichenin and cereal beta-D-glucans.. Rate of hydrolysis of cellulo-oligosaccharides increased with increasing chain length from cellotriose to cellopentaose. This chain is Endoglucanase B (CELB), found in Neocallimastix patriciarum (Rumen fungus).